Consider the following 293-residue polypeptide: Protease HtpX (293 aa).

2 helical membrane passes run 4 to 24 and 32 to 52; these read IALF…ILSL and VMGL…VSLL. His-139 contacts Zn(2+). The active site involves Glu-140. His-143 serves as a coordination point for Zn(2+). 2 helical membrane-spanning segments follow: residues 158–178 and 193–213; these read IVNT…AGFM and MVYF…ASTI. Glu-222 contributes to the Zn(2+) binding site.

This sequence belongs to the peptidase M48B family. Zn(2+) serves as cofactor.

It is found in the cell inner membrane. The protein is Protease HtpX of Erwinia tasmaniensis (strain DSM 17950 / CFBP 7177 / CIP 109463 / NCPPB 4357 / Et1/99).